Consider the following 479-residue polypeptide: Probable cytosol aminopeptidase (479 aa).

Mn(2+) contacts are provided by lysine 251 and aspartate 256. Lysine 263 is a catalytic residue. Positions 274, 333, and 335 each coordinate Mn(2+). Arginine 337 is an active-site residue.

The protein belongs to the peptidase M17 family. It depends on Mn(2+) as a cofactor.

It localises to the cytoplasm. It catalyses the reaction Release of an N-terminal amino acid, Xaa-|-Yaa-, in which Xaa is preferably Leu, but may be other amino acids including Pro although not Arg or Lys, and Yaa may be Pro. Amino acid amides and methyl esters are also readily hydrolyzed, but rates on arylamides are exceedingly low.. It carries out the reaction Release of an N-terminal amino acid, preferentially leucine, but not glutamic or aspartic acids.. Its function is as follows. Presumably involved in the processing and regular turnover of intracellular proteins. Catalyzes the removal of unsubstituted N-terminal amino acids from various peptides. This is Probable cytosol aminopeptidase from Albidiferax ferrireducens (strain ATCC BAA-621 / DSM 15236 / T118) (Rhodoferax ferrireducens).